We begin with the raw amino-acid sequence, 1866 residues long: Rho GTPase-activating protein 100F (1866 aa).

Disordered stretches follow at residues 22–98 (MLCC…AGVK), 262–336 (RRGN…NNYS), and 466–530 (LRSS…DTEA). Positions 59-77 (GNQQHHGNQQHHGNQQQHH) are enriched in low complexity. One can recognise a PDZ domain in the interval 179–264 (LVEIVKRPGQ…LVLAIRQRRG (86 aa)). Pro residues predominate over residues 271 to 286 (PGPPTLSRPEQKPPPV). A compositionally biased stretch (basic and acidic residues) spans 301–326 (TDRMPRPRSSRDRRTGDGREMTESRS). Serine 719 carries the post-translational modification Phosphoserine. The tract at residues 745 to 775 (AGPASPSGSILSTGGHQSPAPTPSATLPRPH) is disordered. Residues 750–760 (PSGSILSTGGH) show a composition bias toward polar residues. In terms of domain architecture, C2 spans 789–908 (KLDKPIVDIG…LRQSPLHQLA (120 aa)). The Rho-GAP domain maps to 948–1148 (ADLETVVNRE…YLLQIWPQPQ (201 aa)). Disordered regions lie at residues 1273–1328 (GGSV…QVKI), 1356–1380 (PTTQ…RRGN), 1393–1479 (SVVN…DLVS), 1514–1607 (FTPI…MVST), 1644–1727 (YTND…YGTL), and 1819–1840 (DEKP…ADKG). Positions 1282 to 1292 (DPSPLPLPGTP) are enriched in pro residues. Residues 1293–1302 (SPGSSSASTG) show a composition bias toward low complexity. Composition is skewed to polar residues over residues 1356-1377 (PTTQ…TASR), 1393-1408 (SVVN…YTGS), and 1416-1429 (GNSS…NASG). The span at 1443–1479 (SSATSSSSSSQATVLSAGSTATSAPTTSSDDSDDLVS) shows a compositional bias: low complexity. Residues 1538–1587 (QLVTPISGSSSKPGATTGAISKYTTGSVESSINANSQKLSSPSRLCNSKD) show a composition bias toward polar residues. Low complexity-rich tracts occupy residues 1590 to 1607 (SRTG…MVST) and 1644 to 1658 (YTND…SSKS). Positions 1659 to 1670 (GIGGGSGTGLGA) are enriched in gly residues. Composition is skewed to low complexity over residues 1671-1688 (VSGA…LFGS) and 1696-1720 (GSSH…NHNT). Residues 1830-1839 (HGEEKLGADK) show a composition bias toward basic and acidic residues.

In terms of assembly, interacts (via PDZ domain) with Nrx-1; may recruit Nrx-1 to the presynaptic active zone.

Its subcellular location is the presynapse. In terms of biological role, GTPase activator for the Rho-type GTPases by converting them to an inactive GDP-bound state. Promotes the anchoring of Liprin-alpha clusters at synapses. Recruits and keeps Nrx-1 levels high in active zones in the presynapse opposite the postsynaptic region. The sequence is that of Rho GTPase-activating protein 100F (RhoGAP100F) from Drosophila melanogaster (Fruit fly).